The following is a 182-amino-acid chain: CDP-diacylglycerol--glycerol-3-phosphate 3-phosphatidyltransferase (182 aa).

The Cytoplasmic portion of the chain corresponds to Met1–Phe12. The helical transmembrane segment at Arg13 to Ile37 threads the bilayer. At Ile38–Thr60 the chain is on the periplasmic side. The helical transmembrane segment at Cys61–Leu81 threads the bilayer. The Cytoplasmic portion of the chain corresponds to Ile82–Phe86. A helical transmembrane segment spans residues His87–Ser107. Residues Leu108–Glu145 are Periplasmic-facing. A helical membrane pass occupies residues Thr146–Met168. Residues Leu169–Arg181 lie on the Cytoplasmic side of the membrane.

This sequence belongs to the CDP-alcohol phosphatidyltransferase class-I family.

It is found in the cell inner membrane. It catalyses the reaction a CDP-1,2-diacyl-sn-glycerol + sn-glycerol 3-phosphate = a 1,2-diacyl-sn-glycero-3-phospho-(1'-sn-glycero-3'-phosphate) + CMP + H(+). The protein operates within phospholipid metabolism; phosphatidylglycerol biosynthesis; phosphatidylglycerol from CDP-diacylglycerol: step 1/2. Functionally, catalyzes the conversion of cytidine diphosphate diacylglycerol (CDP-DG) and glycerol 3-phosphate into phosphatidylglycerol. Essential for the synthesis of anionic phospholipids, thereby playing a role in balancing the ratio of zwitterionic and anionic phospholipids, which is thought to be important for normal membrane function. In Wigglesworthia glossinidia brevipalpis, this protein is CDP-diacylglycerol--glycerol-3-phosphate 3-phosphatidyltransferase.